The primary structure comprises 661 residues: tRNA uridine 5-carboxymethylaminomethyl modification enzyme MnmG (661 aa).

Residues 16–21 (GAGHAG), Val-128, and Ser-183 each bind FAD. Positions 206–230 (PRVNGNTIDYSKTEEEPGDKTPRHF) are disordered. A compositionally biased stretch (basic and acidic residues) spans 216–230 (SKTEEEPGDKTPRHF). 277–291 (GPRYCPSIEDKVVRF) is a binding site for NAD(+). Gln-374 provides a ligand contact to FAD.

Belongs to the MnmG family. As to quaternary structure, homodimer. Heterotetramer of two MnmE and two MnmG subunits. Requires FAD as cofactor.

Its subcellular location is the cytoplasm. NAD-binding protein involved in the addition of a carboxymethylaminomethyl (cmnm) group at the wobble position (U34) of certain tRNAs, forming tRNA-cmnm(5)s(2)U34. The polypeptide is tRNA uridine 5-carboxymethylaminomethyl modification enzyme MnmG (Lactobacillus helveticus (strain DPC 4571)).